The chain runs to 192 residues: Holliday junction branch migration complex subunit RuvA (192 aa).

The segment at 1-64 (MIGRLTGILA…EDGHYLYGFL (64 aa)) is domain I. The interval 65–143 (TEAERFAFRQ…DATGVSLHPA (79 aa)) is domain II. Residues 144–149 (VDDSKQ) form a flexible linker region. A domain III region spans residues 149–192 (QDISNALLALGYNEKEAASAMKQLPADVSTSDGIRAALKLLSKV).

This sequence belongs to the RuvA family. In terms of assembly, homotetramer. Forms an RuvA(8)-RuvB(12)-Holliday junction (HJ) complex. HJ DNA is sandwiched between 2 RuvA tetramers; dsDNA enters through RuvA and exits via RuvB. An RuvB hexamer assembles on each DNA strand where it exits the tetramer. Each RuvB hexamer is contacted by two RuvA subunits (via domain III) on 2 adjacent RuvB subunits; this complex drives branch migration. In the full resolvosome a probable DNA-RuvA(4)-RuvB(12)-RuvC(2) complex forms which resolves the HJ.

Its subcellular location is the cytoplasm. Its function is as follows. The RuvA-RuvB-RuvC complex processes Holliday junction (HJ) DNA during genetic recombination and DNA repair, while the RuvA-RuvB complex plays an important role in the rescue of blocked DNA replication forks via replication fork reversal (RFR). RuvA specifically binds to HJ cruciform DNA, conferring on it an open structure. The RuvB hexamer acts as an ATP-dependent pump, pulling dsDNA into and through the RuvAB complex. HJ branch migration allows RuvC to scan DNA until it finds its consensus sequence, where it cleaves and resolves the cruciform DNA. The sequence is that of Holliday junction branch migration complex subunit RuvA from Dechloromonas aromatica (strain RCB).